The sequence spans 92 residues: Small ribosomal subunit protein uS17 (92 aa).

Belongs to the universal ribosomal protein uS17 family. In terms of assembly, part of the 30S ribosomal subunit.

One of the primary rRNA binding proteins, it binds specifically to the 5'-end of 16S ribosomal RNA. The sequence is that of Small ribosomal subunit protein uS17 from Mycoplasma mobile (strain ATCC 43663 / 163K / NCTC 11711) (Mesomycoplasma mobile).